We begin with the raw amino-acid sequence, 76 residues long: UPF0291 protein BC_1827 (76 aa).

It belongs to the UPF0291 family.

The protein resides in the cytoplasm. This Bacillus cereus (strain ATCC 14579 / DSM 31 / CCUG 7414 / JCM 2152 / NBRC 15305 / NCIMB 9373 / NCTC 2599 / NRRL B-3711) protein is UPF0291 protein BC_1827.